Reading from the N-terminus, the 239-residue chain is Orotidine 5'-phosphate decarboxylase (239 aa).

Residues Asp15, Lys37, 64–73, Thr126, Arg187, Gln196, Gly216, and Arg217 contribute to the substrate site; that span reads DLKFHDIPNT. The active-site Proton donor is Lys66.

This sequence belongs to the OMP decarboxylase family. Type 1 subfamily. In terms of assembly, homodimer.

The enzyme catalyses orotidine 5'-phosphate + H(+) = UMP + CO2. It participates in pyrimidine metabolism; UMP biosynthesis via de novo pathway; UMP from orotate: step 2/2. Its function is as follows. Catalyzes the decarboxylation of orotidine 5'-monophosphate (OMP) to uridine 5'-monophosphate (UMP). The sequence is that of Orotidine 5'-phosphate decarboxylase from Geobacter metallireducens (strain ATCC 53774 / DSM 7210 / GS-15).